A 231-amino-acid polypeptide reads, in one-letter code: 5'-methylthioadenosine/S-adenosylhomocysteine nucleosidase (231 aa).

Glutamate 12 acts as the Proton acceptor in catalysis. Residues glycine 78, valine 153, and 174–175 each bind substrate; that span reads ME. The active-site Proton donor is aspartate 198.

Belongs to the PNP/UDP phosphorylase family. MtnN subfamily.

It carries out the reaction S-adenosyl-L-homocysteine + H2O = S-(5-deoxy-D-ribos-5-yl)-L-homocysteine + adenine. The enzyme catalyses S-methyl-5'-thioadenosine + H2O = 5-(methylsulfanyl)-D-ribose + adenine. The catalysed reaction is 5'-deoxyadenosine + H2O = 5-deoxy-D-ribose + adenine. The protein operates within amino-acid biosynthesis; L-methionine biosynthesis via salvage pathway; S-methyl-5-thio-alpha-D-ribose 1-phosphate from S-methyl-5'-thioadenosine (hydrolase route): step 1/2. Its function is as follows. Catalyzes the irreversible cleavage of the glycosidic bond in both 5'-methylthioadenosine (MTA) and S-adenosylhomocysteine (SAH/AdoHcy) to adenine and the corresponding thioribose, 5'-methylthioribose and S-ribosylhomocysteine, respectively. Also cleaves 5'-deoxyadenosine, a toxic by-product of radical S-adenosylmethionine (SAM) enzymes, into 5-deoxyribose and adenine. This chain is 5'-methylthioadenosine/S-adenosylhomocysteine nucleosidase, found in Aliivibrio salmonicida (strain LFI1238) (Vibrio salmonicida (strain LFI1238)).